Reading from the N-terminus, the 438-residue chain is Serine hydroxymethyltransferase (438 aa).

Residues L119 and 123-125 (GHL) contribute to the (6S)-5,6,7,8-tetrahydrofolate site. K228 is subject to N6-(pyridoxal phosphate)lysine. 370–372 (SPF) contacts (6S)-5,6,7,8-tetrahydrofolate.

It belongs to the SHMT family. In terms of assembly, homodimer. It depends on pyridoxal 5'-phosphate as a cofactor.

The protein resides in the cytoplasm. It catalyses the reaction (6R)-5,10-methylene-5,6,7,8-tetrahydrofolate + glycine + H2O = (6S)-5,6,7,8-tetrahydrofolate + L-serine. It functions in the pathway one-carbon metabolism; tetrahydrofolate interconversion. The protein operates within amino-acid biosynthesis; glycine biosynthesis; glycine from L-serine: step 1/1. Its function is as follows. Catalyzes the reversible interconversion of serine and glycine with tetrahydrofolate (THF) serving as the one-carbon carrier. This reaction serves as the major source of one-carbon groups required for the biosynthesis of purines, thymidylate, methionine, and other important biomolecules. Also exhibits THF-independent aldolase activity toward beta-hydroxyamino acids, producing glycine and aldehydes, via a retro-aldol mechanism. The chain is Serine hydroxymethyltransferase from Pelodictyon phaeoclathratiforme (strain DSM 5477 / BU-1).